Reading from the N-terminus, the 847-residue chain is Ras GTPase-activating protein 2 (847 aa).

The segment covering 1-21 (MAAAAPAAAASPEAPAVSGSA) has biased composition (low complexity). Positions 1–31 (MAAAAPAAAASPEAPAVSGSADPETGDEDSR) are disordered. Alanine 2 is modified (N-acetylalanine). 2 C2 domains span residues 19–137 (GSAD…ETWF) and 148–288 (VQGK…QAWY). The region spanning 371-588 (NKLVPFITAV…TDVKKFLDEI (218 aa)) is the Ras-GAP domain. Serine 554 carries the post-translational modification Phosphoserine. In terms of domain architecture, PH spans 603–704 (VHLKEGEMYK…WIDVLCRVSR (102 aa)). The Btk-type zinc finger occupies 706–742 (NHNRLSSFHPSAYLNGNWLCCQETSESTPGCKPCTAG). Histidine 714, cysteine 725, cysteine 726, and cysteine 736 together coordinate Zn(2+). Residues 819 to 847 (DEPHEKYRKKRSSSAKYGSKENPIVGKIS) are disordered.

It is found in the cell membrane. Inhibitory regulator of the Ras-cyclic AMP pathway. Binds inositol tetrakisphosphate (IP4) and phospholipids. The protein is Ras GTPase-activating protein 2 (Rasa2) of Mus musculus (Mouse).